Here is a 272-residue protein sequence, read N- to C-terminus: Putative protein-disulfide oxidoreductase RP025 (272 aa).

The N-terminal stretch at 1-21 (MRNIFIVLIFLFLSNCSEVKA) is a signal peptide. Positions 74–263 (DSREQKKPEI…ISKAVDKALD (190 aa)) constitute a Thioredoxin domain. A disulfide bond links cysteine 116 and cysteine 119.

The protein belongs to the thioredoxin family. DsbA subfamily.

Its subcellular location is the periplasm. Functionally, may be required for disulfide bond formation in some proteins. In Rickettsia prowazekii (strain Madrid E), this protein is Putative protein-disulfide oxidoreductase RP025.